A 365-amino-acid polypeptide reads, in one-letter code: tRNA-specific 2-thiouridylase MnmA (365 aa).

ATP is bound by residues 6 to 13 (AMSGGVDS) and Leu-32. The active-site Nucleophile is Cys-101. Cys-101 and Cys-199 are oxidised to a cystine. Position 125 (Gly-125) interacts with ATP. An interaction with tRNA region spans residues 149–151 (KDQ). The Cysteine persulfide intermediate role is filled by Cys-199.

It belongs to the MnmA/TRMU family.

Its subcellular location is the cytoplasm. The catalysed reaction is S-sulfanyl-L-cysteinyl-[protein] + uridine(34) in tRNA + AH2 + ATP = 2-thiouridine(34) in tRNA + L-cysteinyl-[protein] + A + AMP + diphosphate + H(+). Functionally, catalyzes the 2-thiolation of uridine at the wobble position (U34) of tRNA, leading to the formation of s(2)U34. This chain is tRNA-specific 2-thiouridylase MnmA, found in Corynebacterium glutamicum (strain R).